The chain runs to 482 residues: Membrane-bound lytic murein transglycosylase F (482 aa).

The signal sequence occupies residues Met-1–Ala-18. The non-LT domain stretch occupies residues Ile-19–Ile-267. The segment at Ser-268–Asp-482 is LT domain. Glu-312 is an active-site residue. A compositionally biased stretch (polar residues) spans Glu-457–Ala-470. The tract at residues Glu-457–Asp-482 is disordered. The span at Asn-473 to Asp-482 shows a compositional bias: basic and acidic residues.

In the N-terminal section; belongs to the bacterial solute-binding protein 3 family. It in the C-terminal section; belongs to the transglycosylase Slt family.

It localises to the cell outer membrane. The catalysed reaction is Exolytic cleavage of the (1-&gt;4)-beta-glycosidic linkage between N-acetylmuramic acid (MurNAc) and N-acetylglucosamine (GlcNAc) residues in peptidoglycan, from either the reducing or the non-reducing ends of the peptidoglycan chains, with concomitant formation of a 1,6-anhydrobond in the MurNAc residue.. Murein-degrading enzyme that degrades murein glycan strands and insoluble, high-molecular weight murein sacculi, with the concomitant formation of a 1,6-anhydromuramoyl product. Lytic transglycosylases (LTs) play an integral role in the metabolism of the peptidoglycan (PG) sacculus. Their lytic action creates space within the PG sacculus to allow for its expansion as well as for the insertion of various structures such as secretion systems and flagella. This is Membrane-bound lytic murein transglycosylase F from Haemophilus influenzae (strain 86-028NP).